We begin with the raw amino-acid sequence, 550 residues long: Endonuclease/exonuclease/phosphatase family domain-containing protein 1 (550 aa).

Residues E39 to Y68 enclose the HhH domain. Residues S194–S213 show a composition bias toward polar residues. The disordered stretch occupies residues S194 to P216.

This Danio rerio (Zebrafish) protein is Endonuclease/exonuclease/phosphatase family domain-containing protein 1 (eepd1).